The sequence spans 367 residues: Probable ATP-dependent RNA helicase MJ0669 (367 aa).

Residues 6–34 carry the Q motif motif; that stretch reads MNFNELNLSDNILNAIRNKGFEKPTDIQM. The Helicase ATP-binding domain maps to 38 to 206; sequence PLFLNDEYNI…KKYMGDYSFI (169 aa). 51–58 contributes to the ATP binding site; the sequence is ARTGSGKT. Positions 154–157 match the DEAD box motif; sequence DEAD. A Helicase C-terminal domain is found at 213–367; the sequence is NIEQSYVEVN…KLKIKKLKFG (155 aa).

This sequence belongs to the DEAD box helicase family. Homodimer.

The catalysed reaction is ATP + H2O = ADP + phosphate + H(+). This is Probable ATP-dependent RNA helicase MJ0669 from Methanocaldococcus jannaschii (strain ATCC 43067 / DSM 2661 / JAL-1 / JCM 10045 / NBRC 100440) (Methanococcus jannaschii).